The primary structure comprises 67 residues: MLYPSIDNLLLKIDSKYSLVTVAAKRARYMQLENDKGVLPSYQSDKFVGKALEEIHAGKLVLQNDDK.

This sequence belongs to the RNA polymerase subunit omega family. As to quaternary structure, the RNAP catalytic core consists of 2 alpha, 1 beta, 1 beta' and 1 omega subunit. When a sigma factor is associated with the core the holoenzyme is formed, which can initiate transcription.

The catalysed reaction is RNA(n) + a ribonucleoside 5'-triphosphate = RNA(n+1) + diphosphate. Its function is as follows. Promotes RNA polymerase assembly. Latches the N- and C-terminal regions of the beta' subunit thereby facilitating its interaction with the beta and alpha subunits. The sequence is that of DNA-directed RNA polymerase subunit omega from Listeria monocytogenes serotype 4b (strain F2365).